We begin with the raw amino-acid sequence, 83 residues long: Small ribosomal subunit protein bS20 (83 aa).

It belongs to the bacterial ribosomal protein bS20 family.

Its function is as follows. Binds directly to 16S ribosomal RNA. The chain is Small ribosomal subunit protein bS20 from Staphylococcus aureus (strain JH1).